Here is a 186-residue protein sequence, read N- to C-terminus: Outer-membrane lipoprotein LolB (186 aa).

The signal sequence occupies residues 1–16 (MRRLAVIASLAWALGG). Cys-17 carries N-palmitoyl cysteine lipidation. A lipid anchor (S-diacylglycerol cysteine) is attached at Cys-17.

It belongs to the LolB family. Monomer.

The protein resides in the cell outer membrane. Functionally, plays a critical role in the incorporation of lipoproteins in the outer membrane after they are released by the LolA protein. This chain is Outer-membrane lipoprotein LolB, found in Thiobacillus denitrificans (strain ATCC 25259 / T1).